The following is a 104-amino-acid chain: ATP-dependent Clp protease adapter protein ClpS (104 aa).

This sequence belongs to the ClpS family. In terms of assembly, binds to the N-terminal domain of the chaperone ClpA.

Functionally, involved in the modulation of the specificity of the ClpAP-mediated ATP-dependent protein degradation. The sequence is that of ATP-dependent Clp protease adapter protein ClpS from Oleidesulfovibrio alaskensis (strain ATCC BAA-1058 / DSM 17464 / G20) (Desulfovibrio alaskensis).